The primary structure comprises 348 residues: sn-glycerol-3-phosphate import ATP-binding protein UgpC 3 (348 aa).

In terms of domain architecture, ABC transporter spans 4–234 (INIIDVKKNY…PASLFVASFI (231 aa)). Residue 36–43 (GPSGCGKS) participates in ATP binding.

Belongs to the ABC transporter superfamily. sn-glycerol-3-phosphate importer (TC 3.A.1.1.3) family. The complex is composed of two ATP-binding proteins (UgpC), two transmembrane proteins (UgpA and UgpE) and a solute-binding protein (UgpB).

It is found in the cell inner membrane. It carries out the reaction sn-glycerol 3-phosphate(out) + ATP + H2O = sn-glycerol 3-phosphate(in) + ADP + phosphate + H(+). Part of the ABC transporter complex UgpBAEC involved in sn-glycerol-3-phosphate (G3P) import. Responsible for energy coupling to the transport system. The protein is sn-glycerol-3-phosphate import ATP-binding protein UgpC 3 of Rhizobium johnstonii (strain DSM 114642 / LMG 32736 / 3841) (Rhizobium leguminosarum bv. viciae).